We begin with the raw amino-acid sequence, 114 residues long: Fumarate reductase subunit D (114 aa).

The next 3 membrane-spanning stretches (helical) occupy residues 24 to 44, 50 to 70, and 92 to 112; these read VSAI…PFGL, LITF…TIFP, and GGFI…FAVI.

The protein belongs to the FrdD family. Part of an enzyme complex containing four subunits: a flavoprotein (FrdA), an iron-sulfur protein (FrdB), and two hydrophobic anchor proteins (FrdC and FrdD).

The protein localises to the cell inner membrane. Functionally, anchors the catalytic components of the fumarate reductase complex to the cell membrane, binds quinones. The protein is Fumarate reductase subunit D of Haemophilus influenzae (strain PittGG).